The chain runs to 431 residues: MDKFWWHAAWGLCLLPLSLAQQQIDLNITCRYAGVFHVEKNGRYSISRTEAADLCQAFNSTLPTMDQMVMALSKGFETCRYGFIEGHVVIPRIQPNAICAANHTGVYILTSNTSHYDTYCFNASAPLEEDCTSVTDLPNSFEGPVTITIVNRDGTRYSKKGEYRTHQEDIDASNTTDDDVSSGSSSEKSTSGGYVFHTYLPTIHSTADQDDPYFIGSTMATTRSGGKDGRRGGGLPKDATTSLEGYTTHYPETMENGTLTPVTPAKTGVFGETEVTVAEDSNFNVDGSLPGDQDSSMDPRGNSLTVTDGSKLTGHSSGNQDSGANTTSRPGRKPQIPEWLIVLASLLALALILAVCIAVNSRRRCGQKKKLVINSGNGKVEDRKPSELNGEASKSQEMVHLVNKEPSETPDQFMTADETRNLQNVDMKIGV.

A signal peptide spans 1-22; sequence MDKFWWHAAWGLCLLPLSLAQQ. Topologically, residues 23-338 are extracellular; sequence QIDLNITCRY…RPGRKPQIPE (316 aa). A glycan (N-linked (GlcNAc...) asparagine) is linked at asparagine 27. 3 disulfide bridges follow: cysteine 30–cysteine 131, cysteine 55–cysteine 120, and cysteine 79–cysteine 99. In terms of domain architecture, Link spans 34–122; that stretch reads GVFHVEKNGR…TSHYDTYCFN (89 aa). Hyaluronan is bound at residue arginine 43. N-linked (GlcNAc...) asparagine glycosylation is present at asparagine 59. Residues arginine 80 and tyrosine 81 each contribute to the hyaluronan site. Asparagine 102 carries N-linked (GlcNAc...) asparagine glycosylation. Residue tyrosine 107 coordinates hyaluronan. N-linked (GlcNAc...) asparagine glycans are attached at residues asparagine 112 and asparagine 122. Over residues 158-169 the composition is skewed to basic and acidic residues; it reads SKKGEYRTHQED. 2 disordered regions span residues 158-191 and 219-243; these read SKKG…KSTS and MATT…TTSL. Asparagine 174 is a glycosylation site (N-linked (GlcNAc...) asparagine). Low complexity predominate over residues 181-191; that stretch reads SSGSSSEKSTS. Serine 182 carries O-linked (Xyl...) (chondroitin sulfate) serine glycosylation. The interval 226–338 is stem; that stretch reads GKDGRRGGGL…RPGRKPQIPE (113 aa). 2 N-linked (GlcNAc...) asparagine glycosylation sites follow: asparagine 256 and asparagine 325. Positions 279 to 333 are disordered; it reads EDSNFNVDGSLPGDQDSSMDPRGNSLTVTDGSKLTGHSSGNQDSGANTTSRPGRK. Residues 302–329 are compositionally biased toward polar residues; that stretch reads NSLTVTDGSKLTGHSSGNQDSGANTTSR. A helical membrane pass occupies residues 339-359; sequence WLIVLASLLALALILAVCIAV. Topologically, residues 360 to 431 are cytoplasmic; sequence NSRRRCGQKK…LQNVDMKIGV (72 aa). Serine 361 bears the Phosphoserine; by PKC mark. A required for interaction with EZR, MSN and RDX and for co-localization to microvilli region spans residues 362-380; sequence RRRCGQKKKLVINSGNGKV. Phosphoserine is present on residues serine 375, serine 386, and serine 395. The interval 376 to 396 is disordered; it reads GNGKVEDRKPSELNGEASKSQ.

As to quaternary structure, interacts with PKN2. Interacts with TIAM1 and TIAM2. Interacts with HA, as well as other glycosaminoglycans, collagen, laminin, and fibronectin via its N-terminal segment. Interacts with UNC119. Interacts with PDPN (via extracellular domain); this interaction is required for PDPN-mediated directional migration and regulation of lamellipodia extension/stabilization during cell spreading and migration. Interacts with RDX, EZR and MSN. Interacts with EGFR. Interacts with CD74; this complex is essential for the MIF-induced signaling cascade that results in B cell survival. N-glycosylated. In terms of processing, O-glycosylated; contains chondroitin sulfate glycans which can be more or less sulfated. Post-translationally, phosphorylated; activation of PKC results in the dephosphorylation of Ser-395 (constitutive phosphorylation site), and the phosphorylation of Ser-361.

The protein resides in the cell membrane. The protein localises to the cell projection. Its subcellular location is the microvillus. It localises to the secreted. In terms of biological role, cell-surface receptor that plays a role in cell-cell interactions, cell adhesion and migration, helping them to sense and respond to changes in the tissue microenvironment. Participates thereby in a wide variety of cellular functions including the activation, recirculation and homing of T-lymphocytes, hematopoiesis, inflammation and response to bacterial infection. Engages, through its ectodomain, extracellular matrix components such as hyaluronan/HA, collagen, growth factors, cytokines or proteases and serves as a platform for signal transduction by assembling, via its cytoplasmic domain, protein complexes containing receptor kinases and membrane proteases. Such effectors include PKN2, the RhoGTPases RAC1 and RHOA, Rho-kinases and phospholipase C that coordinate signaling pathways promoting calcium mobilization and actin-mediated cytoskeleton reorganization essential for cell migration and adhesion. The polypeptide is CD44 antigen (CD44) (Mesocricetus auratus (Golden hamster)).